The chain runs to 605 residues: Formin-binding protein 1-like (605 aa).

One can recognise an F-BAR domain in the interval 1–263 (MSWGTELWDQ…AAKSVDERRD (263 aa)). The stretch at 66-258 (FTSCVAFFNI…EGMILAAKSV (193 aa)) forms a coiled coil. The interval 245–535 (SKCLEGMILA…EFDDEFEDDD (291 aa)) is interaction with CDC42. A Phosphoserine modification is found at Ser-295. A coiled-coil region spans residues 392–484 (LEDFSHLPPE…VEGKTGGRGD (93 aa)). Residues 397–474 (HLPPEQRRKK…IHKNEAWLSE (78 aa)) form the REM-1 domain. Residues 476–490 (EGKTGGRGDRRHSSD) are compositionally biased toward basic and acidic residues. Residues 476 to 539 (EGKTGGRGDR…EFEDDDPLPA (64 aa)) form a disordered region. Phosphoserine is present on residues Ser-488, Ser-501, and Ser-505. The interaction with DNM1 stretch occupies residues 522–605 (GHHNEFDDEF…VTLEKNSKGS (84 aa)). A compositionally biased stretch (acidic residues) spans 527–536 (FDDEFEDDDP). In terms of domain architecture, SH3 spans 538-599 (PAIGHCKAIY…PTSYIDVTLE (62 aa)). The interval 541–597 (GHCKAIYPFDGHNEGTLAMKEGEVLYIIEEDKGDGWTRARRQNGEEGYVPTSYIDVT) is interaction with DNM2 and WASL. The tract at residues 541–605 (GHCKAIYPFD…VTLEKNSKGS (65 aa)) is interaction with DAAM1, DIAPH1 and DIAPH2.

It belongs to the FNBP1 family. In terms of assembly, homodimerizes, the dimers can polymerize end-to-end to form filamentous structures. Interacts with GTP-bound CDC42. Interacts with DAAM1, DIAPH1, DIAPH2, DNM1, DNM2 and WASL/N-WASP. Interacts with ATG3. Interacts (via SH3 domain) with ABI1, WASF2, CDC42 and WIPF1.

It localises to the cytoplasm. It is found in the cytoskeleton. The protein resides in the cell cortex. Its subcellular location is the cytoplasmic vesicle. The protein localises to the cell membrane. Functionally, required to coordinate membrane tubulation with reorganization of the actin cytoskeleton during endocytosis. May bind to lipids such as phosphatidylinositol 4,5-bisphosphate and phosphatidylserine and promote membrane invagination and the formation of tubules. Also promotes CDC42-induced actin polymerization by activating the WASL/N-WASP-WASPIP/WIP complex, the predominant form of WASL/N-WASP in cells. Actin polymerization may promote the fission of membrane tubules to form endocytic vesicles. Essential for autophagy of intracellular bacterial pathogens. The polypeptide is Formin-binding protein 1-like (FNBP1L) (Homo sapiens (Human)).